A 1052-amino-acid polypeptide reads, in one-letter code: Lateral signaling target protein 2 homolog (1052 aa).

Disordered regions lie at residues 311–348 (YSSI…TSPH), 379–455 (PSML…DSDS), 506–539 (DEFG…STSA), 551–678 (LRLP…ASSF), and 814–973 (NTID…IPDG). 3 stretches are compositionally biased toward low complexity: residues 312–346 (SSIE…STTS), 379–392 (PSML…TPTA), and 400–419 (PSHS…NPPA). The span at 422–455 (SEDDDDDDEEREDDEEECGMLDSDEQDLNDDSDS) shows a compositional bias: acidic residues. Positions 554–574 (PSSSSENEQTTGSNQQSTIKT) are enriched in polar residues. Residues Ser555 and Ser556 each carry the phosphoserine modification. 2 stretches are compositionally biased toward basic residues: residues 588–614 (RQRH…HHQQ) and 625–644 (SHHH…ARKR). The segment covering 652–661 (STTAEQQQTI) has biased composition (polar residues). The segment covering 824–842 (NNNNNNNNNSGSSSSSNSS) has biased composition (low complexity). Ser854 is subject to Phosphoserine. Low complexity predominate over residues 872 to 915 (QQQQQQQAQLQLQMQRQRNNSVGSNSPSSSSSSSSSSEHNSPIS). A compositionally biased stretch (polar residues) spans 926–935 (SNSASMPSIG). The span at 936–963 (STATTAAATAAATATTTTSATTTTTTTT) shows a compositional bias: low complexity. The FYVE-type zinc finger occupies 972 to 1032 (DGKAPRCMSC…VCRECYVREV (61 aa)). Positions 978, 981, 994, 997, 1002, 1005, 1024, and 1027 each coordinate Zn(2+).

It belongs to the lst-2 family.

Its function is as follows. Negative regulator of epidermal growth factor receptor (EGFR) signaling. This Drosophila virilis (Fruit fly) protein is Lateral signaling target protein 2 homolog.